The chain runs to 284 residues: Probable ADP-ribose 1''-phosphate phosphatase YML087W (284 aa).

The substrate site is built by aspartate 23, glutamine 55, asparagine 80, and aspartate 90. The Macro domain maps to 34–230 (ESIPHAYIQN…HISKELKNVL (197 aa)). Catalysis depends on residues asparagine 80 and aspartate 90. Cysteine 128 and cysteine 136 are joined by a disulfide. Histidine 145 is an active-site residue. The substrate site is built by threonine 148 and threonine 195.

In terms of assembly, homodimer.

The catalysed reaction is ADP-alpha-D-ribose 1''-phosphate + H2O = ADP-D-ribose + phosphate. In terms of biological role, highly specific phosphatase involved in the metabolism of ADP-ribose 1''-phosphate (Appr1p) which is produced as a consequence of tRNA splicing. + phosphate. This chain is Probable ADP-ribose 1''-phosphate phosphatase YML087W, found in Saccharomyces cerevisiae (strain ATCC 204508 / S288c) (Baker's yeast).